The primary structure comprises 367 residues: MSSQPFWDERIHRWRCLGSEGNELIYIDEEQTWKDYDPNSLKMNKAGSTGAEVSDVTAEATEGKESSNGEDRHTKRLYESTSAEGYPSGSRNKKSKSENSEASPAPVINKAVYIQGLPLDVTVDEIEEVFKKCGVIAKNIDNGTPRIKIYRTEDGTPKGDALIVFFRSESVELAEQLFDDTEFRYGSGQKMRVQKANIDYKKEKTVNKDVGGALKKKALRLRQQQMQQISSWDDVDEEVDDKRKKRFNKIVVLKHIFTLEELDKTPELLIDLKDDITEEAEKCGRVTNVVLYDKEPDGVVTVRFSNNEEAEACVRLMQGRYFDGRVVEASIYDGKVRFQKSGKHTLDDEEDEEKRLEKFADWLENSN.

Positions 36–104 (YDPNSLKMNK…SKSENSEASP (69 aa)) are disordered. Positions 61–78 (TEGKESSNGEDRHTKRLY) are enriched in basic and acidic residues. 2 consecutive RRM domains span residues 112–193 (VYIQ…KMRV) and 268–329 (LLID…VVEA).

It belongs to the HTATSF1 family. As to quaternary structure, interacts with the U2AF large and U2AF small subunits.

Has a role in pre-mRNA splicing. The sequence is that of Splicing factor U2AF-associated protein 2 (uap2) from Schizosaccharomyces pombe (strain 972 / ATCC 24843) (Fission yeast).